A 442-amino-acid chain; its full sequence is uncharacterized protein (442 aa).

The signal sequence occupies residues 1–23 (MEILLIVLGAVVAGLLCPVQTAA). Disordered stretches follow at residues 36 to 67 (TSIS…NSSD) and 91 to 115 (ANET…TNTR). Residues 48–67 (TSSGELSQSTFSSSSTNSSD) are compositionally biased toward low complexity. Asn64, Asn92, Asn99, Asn130, Asn174, Asn225, Asn244, Asn346, Asn363, Asn386, and Asn398 each carry an N-linked (GlcNAc...) asparagine glycan.

The protein localises to the secreted. This is an uncharacterized protein from Arthroderma benhamiae (strain ATCC MYA-4681 / CBS 112371) (Trichophyton mentagrophytes).